We begin with the raw amino-acid sequence, 192 residues long: Transmembrane protein 276 (192 aa).

The N-terminal stretch at 1–32 (MAPKPGAEWSTALSHLVLGVVSLHAAVSTAEA) is a signal peptide. 4 helical membrane-spanning segments follow: residues 35–55 (GAAA…APGL), 63–83 (AGAW…FHWV), 89–109 (SANL…HLGP), and 114–134 (VAGQ…AVFT).

The protein resides in the membrane. In Homo sapiens (Human), this protein is Transmembrane protein 276.